The following is a 775-amino-acid chain: Kinesin-like protein KIF3B (775 aa).

Residues 9-341 (SVKVVVRCRP…LRYANRAKNI (333 aa)) form the Kinesin motor domain. 97–104 (GQTGTGKT) lines the ATP pocket. The interval 372–419 (KRSGRKRRRRRRRRVGEGGEEFEDGEDEEDDDDDDEDEEEGVDADKNI) is disordered. Residues 374 to 385 (SGRKRRRRRRRR) are compositionally biased toward basic residues. Over residues 389–413 (GGEEFEDGEDEEDDDDDDEDEEEGV) the composition is skewed to acidic residues. Residues 501–591 (LELKRQEIAE…QNELTRELKL (91 aa)) adopt a coiled-coil conformation. Residues 716-775 (FHASLGSSPGLSASAAGFSKKPKSGRPKTGKKVSTPTSAHSPLSGSGSPLYPQSRGLVPK) form a disordered region. Positions 718–734 (ASLGSSPGLSASAAGFS) are enriched in low complexity. The span at 735-746 (KKPKSGRPKTGK) shows a compositional bias: basic residues. The segment covering 756-765 (SPLSGSGSPL) has biased composition (low complexity).

The protein belongs to the TRAFAC class myosin-kinesin ATPase superfamily. Kinesin family. In terms of assembly, heterodimer of KIF3A and KIF3B. KIF3A/KIF3B heterodimer interacts with KIFAP3 forming a heterotrimeric (KIF3A/KIF3B/KIFAP3) complex.

The protein resides in the cytoplasm. Its subcellular location is the cytoskeleton. It is found in the cell projection. The protein localises to the cilium. It localises to the dendritic spine. Microtubule-based molecular motor that transport intracellular cargos, such as vesicles, organelles and protein complexes. Uses ATP hydrolysis to generate force to bind and move along the microtubule. Plays a role in cilia formation. Required for photoreceptor development. The polypeptide is Kinesin-like protein KIF3B (Danio rerio (Zebrafish)).